A 162-amino-acid polypeptide reads, in one-letter code: NADH-quinone oxidoreductase subunit I (162 aa).

4Fe-4S ferredoxin-type domains are found at residues 53 to 83 and 93 to 122; these read LRRY…IESE and TRYD…ETHI. 8 residues coordinate [4Fe-4S] cluster: C63, C66, C69, C73, C102, C105, C108, and C112.

It belongs to the complex I 23 kDa subunit family. In terms of assembly, NDH-1 is composed of 14 different subunits. Subunits NuoA, H, J, K, L, M, N constitute the membrane sector of the complex. It depends on [4Fe-4S] cluster as a cofactor.

Its subcellular location is the cell inner membrane. It catalyses the reaction a quinone + NADH + 5 H(+)(in) = a quinol + NAD(+) + 4 H(+)(out). NDH-1 shuttles electrons from NADH, via FMN and iron-sulfur (Fe-S) centers, to quinones in the respiratory chain. The immediate electron acceptor for the enzyme in this species is believed to be ubiquinone. Couples the redox reaction to proton translocation (for every two electrons transferred, four hydrogen ions are translocated across the cytoplasmic membrane), and thus conserves the redox energy in a proton gradient. This chain is NADH-quinone oxidoreductase subunit I, found in Bordetella bronchiseptica (strain ATCC BAA-588 / NCTC 13252 / RB50) (Alcaligenes bronchisepticus).